The primary structure comprises 306 residues: MGNLVIGSRGSELALWQANHIKERLKKECLIESEIQIVKTKGDKILDTPLNKIGGKGLFTKELEELLLKGAIDLAVHSLKDVPVVFEKGLDLACITKRADVRDTFLSVKFPDLMSLPKGAKVGTTSLRRSMQIKLKRQDLDTESLRGNVQTRLKKLECGEFDAIILAEAGLCRLEIQGAKYRKAFSVEEMIPSMGQGALGVEMLKNHKHFATLQKLNDEKSAFCCRLEREFIKGLNGGCQIPIGVHASLMGDRVKIQAVLGLPNGKEVITKEKQGDKTKAFDLVQELLEEFLQSGAKEILEKAQLF.

C239 carries the post-translational modification S-(dipyrrolylmethanemethyl)cysteine.

It belongs to the HMBS family. As to quaternary structure, monomer. Dipyrromethane is required as a cofactor.

It catalyses the reaction 4 porphobilinogen + H2O = hydroxymethylbilane + 4 NH4(+). It functions in the pathway porphyrin-containing compound metabolism; protoporphyrin-IX biosynthesis; coproporphyrinogen-III from 5-aminolevulinate: step 2/4. Tetrapolymerization of the monopyrrole PBG into the hydroxymethylbilane pre-uroporphyrinogen in several discrete steps. This chain is Porphobilinogen deaminase (hemC), found in Helicobacter pylori (strain ATCC 700392 / 26695) (Campylobacter pylori).